Consider the following 316-residue polypeptide: Porphobilinogen deaminase (316 aa).

Cysteine 245 carries the post-translational modification S-(dipyrrolylmethanemethyl)cysteine.

The protein belongs to the HMBS family. In terms of assembly, monomer. Dipyrromethane is required as a cofactor.

It catalyses the reaction 4 porphobilinogen + H2O = hydroxymethylbilane + 4 NH4(+). It functions in the pathway porphyrin-containing compound metabolism; protoporphyrin-IX biosynthesis; coproporphyrinogen-III from 5-aminolevulinate: step 2/4. Its pathway is porphyrin-containing compound metabolism; chlorophyll biosynthesis. In terms of biological role, tetrapolymerization of the monopyrrole PBG into the hydroxymethylbilane pre-uroporphyrinogen in several discrete steps. This is Porphobilinogen deaminase from Prochlorococcus marinus subsp. pastoris (strain CCMP1986 / NIES-2087 / MED4).